Consider the following 34-residue polypeptide: Small ribosomal subunit protein uS2c (34 aa).

It belongs to the universal ribosomal protein uS2 family.

The protein localises to the plastid. The protein resides in the chloroplast. The protein is Small ribosomal subunit protein uS2c (rps2) of Ochrosphaera neapolitana.